Reading from the N-terminus, the 336-residue chain is Inositol 2-dehydrogenase (336 aa).

It belongs to the Gfo/Idh/MocA family. As to quaternary structure, homotetramer.

It catalyses the reaction myo-inositol + NAD(+) = scyllo-inosose + NADH + H(+). Involved in the oxidation of myo-inositol (MI) to 2-keto-myo-inositol (2KMI or 2-inosose). This Paracoccus denitrificans (strain Pd 1222) protein is Inositol 2-dehydrogenase.